A 497-amino-acid polypeptide reads, in one-letter code: Angiopoietin-1 (497 aa).

Residues Met1–Cys19 form the signal peptide. A coiled-coil region spans residues Gln81–Ala119. 5 N-linked (GlcNAc...) asparagine glycosylation sites follow: Asn92, Asn122, Asn154, Asn243, and Asn294. The stretch at Leu153–Leu261 forms a coiled coil. Residues Arg276–Asp496 enclose the Fibrinogen C-terminal domain. Cystine bridges form between Cys285–Cys314 and Cys438–Cys451.

As to quaternary structure, homooligomer. Interacts with TEK/TIE2. Interacts with SVEP1/polydom. Interacts with THBD; this interaction significantly inhibits the generation of activated PC and TAFIa/CPB2 by the thrombin/thrombomodulin complex.

The protein localises to the secreted. In terms of biological role, binds and activates TIE2 receptor by inducing its tyrosine phosphorylation. Implicated in endothelial developmental processes later and distinct from that of VEGF. Appears to play a crucial role in mediating reciprocal interactions between the endothelium and surrounding matrix and mesenchyme. Mediates blood vessel maturation/stability. It may play an important role in the heart early development. This is Angiopoietin-1 (Angpt1) from Rattus norvegicus (Rat).